The following is a 196-amino-acid chain: Interleukin-23 subunit alpha (196 aa).

A signal peptide spans 1-21; the sequence is MLDCRAIILLWLLPWATQGLA.

It belongs to the IL-6 superfamily. As to quaternary structure, heterodimer with IL12B; disulfide-linked. The heterodimer is known as interleukin IL-23. Interacts with IL23R; this interaction enables recruitment of IL12RB1.

It localises to the secreted. Associates with IL12B to form the pro-inflammatory cytokine IL-23 that plays different roles in innate and adaptive immunity. Released by antigen-presenting cells such as dendritic cells or macrophages, binds to a heterodimeric receptor complex composed of IL12RB1 and IL23R to activate JAK2 and TYK2 which then phosphorylate the receptor to form a docking site leading to the phosphorylation of STAT3 and STAT4. This process leads to activation of several pathways including p38 MAPK or NF-kappa-B and promotes the production of pro-inflammatory cytokines such as interleukin-17A/IL17A. In turn, participates in the early and effective intracellular bacterial clearance. Promotes the expansion and survival of T-helper 17 cells, a CD4-positive helper T-cell subset that produces IL-17, as well as other IL-17-producing cells. The sequence is that of Interleukin-23 subunit alpha (Il23a) from Rattus norvegicus (Rat).